Consider the following 268-residue polypeptide: 4-diphosphocytidyl-2-C-methyl-D-erythritol kinase (268 aa).

Lys10 is an active-site residue. 101-111 (PTQAGLGGGST) lines the ATP pocket. Asp143 is an active-site residue.

This sequence belongs to the GHMP kinase family. IspE subfamily.

The catalysed reaction is 4-CDP-2-C-methyl-D-erythritol + ATP = 4-CDP-2-C-methyl-D-erythritol 2-phosphate + ADP + H(+). Its pathway is isoprenoid biosynthesis; isopentenyl diphosphate biosynthesis via DXP pathway; isopentenyl diphosphate from 1-deoxy-D-xylulose 5-phosphate: step 3/6. Its function is as follows. Catalyzes the phosphorylation of the position 2 hydroxy group of 4-diphosphocytidyl-2C-methyl-D-erythritol. This Helicobacter pylori (strain ATCC 700392 / 26695) (Campylobacter pylori) protein is 4-diphosphocytidyl-2-C-methyl-D-erythritol kinase.